We begin with the raw amino-acid sequence, 193 residues long: Zinc finger protein 740 (193 aa).

The segment at 33-75 (SKQAENGERAGSPDVLRCSSQGHRKDSDKSRSRKDDDSLSEAS) is disordered. A Glycyl lysine isopeptide (Lys-Gly) (interchain with G-Cter in SUMO2) cross-link involves residue Lys-34. A Phosphoserine modification is found at Ser-44. Positions 55-69 (HRKDSDKSRSRKDDD) are enriched in basic and acidic residues. 2 C2H2-type zinc fingers span residues 101–123 (FVCE…ILIH) and 129–151 (FECD…KRVH). The C2H2-type 3; atypical zinc-finger motif lies at 157–179 (YQCERCHQCFSRTDRLLRHKRMC).

Belongs to the krueppel C2H2-type zinc-finger protein family.

The protein resides in the nucleus. In terms of biological role, may be involved in transcriptional regulation. This Homo sapiens (Human) protein is Zinc finger protein 740 (ZNF740).